Here is a 98-residue protein sequence, read N- to C-terminus: Prostate and testis expressed protein 3 (98 aa).

Residues 1 to 20 (MNKHFLFLFLLYCLIVAVTS) form the signal peptide. The 77-residue stretch at 21 to 97 (LQCITCHLRT…CCNYNYCNFK (77 aa)) folds into the UPAR/Ly6 domain. 4 cysteine pairs are disulfide-bonded: Cys-23-Cys-50, Cys-26-Cys-35, Cys-42-Cys-68, and Cys-72-Cys-88.

This sequence belongs to the PATE family. Specifically expressed in prostate and testis.

It is found in the secreted. The chain is Prostate and testis expressed protein 3 (PATE3) from Homo sapiens (Human).